Reading from the N-terminus, the 285-residue chain is DegV domain-containing protein CA_C3284 (285 aa).

The DegV domain occupies 3-280 (VKILTDSTSC…PGAIGIAYYT (278 aa)). 2 residues coordinate hexadecanoate: S59 and S91.

Functionally, may bind long-chain fatty acids, such as palmitate, and may play a role in lipid transport or fatty acid metabolism. The polypeptide is DegV domain-containing protein CA_C3284 (Clostridium acetobutylicum (strain ATCC 824 / DSM 792 / JCM 1419 / IAM 19013 / LMG 5710 / NBRC 13948 / NRRL B-527 / VKM B-1787 / 2291 / W)).